We begin with the raw amino-acid sequence, 305 residues long: Tetraspanin-12 (305 aa).

Topologically, residues 1–12 are cytoplasmic; that stretch reads MAREDSVRCLRC. 2 S-palmitoyl cysteine lipidation sites follow: Cys-9 and Cys-12. A helical membrane pass occupies residues 13–33; that stretch reads LLYALNLLFWLMSISVLGVSA. The Extracellular portion of the chain corresponds to 34–59; the sequence is WIRDYLNNVLTLTAETRVEEAVILTY. The helical transmembrane segment at 60-80 threads the bilayer; sequence FPVVHPVMIAVCCFLILVGML. Over 81-89 the chain is Cytoplasmic; the sequence is GYCGTVKRN. The S-palmitoyl cysteine moiety is linked to residue Cys-83. Residues 90–110 form a helical membrane-spanning segment; it reads LLLLVWYFGSLLVIFCVELAC. Residues 111–224 are Extracellular-facing; it reads GVWTYEQEIT…RGTKQLQVLR (114 aa). A helical transmembrane segment spans residues 225–245; sequence FLGISIGVTQILAMILTITLL. Topologically, residues 246–305 are cytoplasmic; sequence WALYYDRRDPGADQIMSLKNDTSQQLSCHSVELLKPSLTGIFEHTSMANSFNTHFEMEEL.

This sequence belongs to the tetraspanin (TM4SF) family. As to quaternary structure, component of a complex, at least composed of TSPAN12, FZD4 and norrin (NDP). Post-translationally, palmitoylated; required for interaction with ADAM10. The precise position of palmitoylated residues is unclear and occurs either on Cys-9, Cys-12 and/or Cys-83.

It localises to the cell membrane. Functionally, regulator of cell surface receptor signal transduction. Plays a central role in retinal vascularization by regulating norrin (NDP) signal transduction. Acts in concert with norrin (NDP) to promote FZD4 multimerization and subsequent activation of FZD4, leading to promote accumulation of beta-catenin (CTNNB1) and stimulate LEF/TCF-mediated transcriptional programs. Suprisingly, it only activates the norrin (NDP)-dependent activation of FZD4, while it does not activate the Wnt-dependent activation of FZD4, suggesting the existence of a Wnt-independent signaling that also promote accumulation the beta-catenin (CTNNB1). The chain is Tetraspanin-12 (TSPAN12) from Gallus gallus (Chicken).